A 275-amino-acid polypeptide reads, in one-letter code: 4,5-DOPA dioxygenase extradiol 1 (275 aa).

Residues histidine 22, histidine 60, histidine 182, and histidine 236 each coordinate Zn(2+).

This sequence belongs to the DODA-type extradiol aromatic ring-opening dioxygenase family. Requires Zn(2+) as cofactor.

It catalyses the reaction L-dopa + O2 = 4-(L-alanin-3-yl)-2-hydroxy-cis,cis-muconate 6-semialdehyde + H(+). It participates in pigment biosynthesis; betalain biosynthesis. Its function is as follows. Opens the cyclic ring of dihydroxy-phenylalanine (DOPA) between carbons 4 and 5, thus producing an unstable seco-DOPA that rearranges nonenzymatically to betalamic acid. This Beta vulgaris (Sugar beet) protein is 4,5-DOPA dioxygenase extradiol 1.